A 183-amino-acid polypeptide reads, in one-letter code: Ribosome maturation factor RimM (183 aa).

A PRC barrel domain is found at 104-183 (EGDYYWKDLM…TIEVDWDPGF (80 aa)).

The protein belongs to the RimM family. Binds ribosomal protein uS19.

The protein resides in the cytoplasm. In terms of biological role, an accessory protein needed during the final step in the assembly of 30S ribosomal subunit, possibly for assembly of the head region. Essential for efficient processing of 16S rRNA. May be needed both before and after RbfA during the maturation of 16S rRNA. It has affinity for free ribosomal 30S subunits but not for 70S ribosomes. This Salmonella arizonae (strain ATCC BAA-731 / CDC346-86 / RSK2980) protein is Ribosome maturation factor RimM.